A 37-amino-acid chain; its full sequence is Turripeptide Lol6.2 (37 aa).

Cystine bridges form between Cys-4–Cys-16, Cys-8–Cys-21, and Cys-15–Cys-29.

As to expression, expressed by the venom duct.

It is found in the secreted. Acts as a neurotoxin by inhibiting an ion channel. The polypeptide is Turripeptide Lol6.2 (Iotyrris olangoensis (Sea snail)).